A 343-amino-acid chain; its full sequence is MKTHERAANLALAGLSLAPLVVKVNPNANVILTACLAVYVGCYRSVKPTPPAETMSKEHAMRFPLVGSAMLLSLFLLFKFLSKDLVNTVLTAYFFILGIAALCATLLPSIKRFLPKEWNDNAIVWRAPLFHSLSVEFTRSQVVASIPGFFFCIWYAAKKHWLANNVLGISFCIQGIEMLSLGSFKTGAILLSGLFFYDIFWVFFTPVMVSVAKSFDAPIKLLFPTGDAARPFSMLGLGDIVIPGIFVALALRFDVSRGIKNRYFNSAFLGYTVGLTVTIIVMNWFQAAQPALLYIVPGVIGFVAVHCLWNGEVKPLLEYNESKAEEEEACEEDTDSKQNKKKE.

The Lumenal portion of the chain corresponds to 1-19; it reads MKTHERAANLALAGLSLAP. The chain crosses the membrane as a helical span at residues 20-40; the sequence is LVVKVNPNANVILTACLAVYV. The Cytoplasmic segment spans residues 41–62; it reads GCYRSVKPTPPAETMSKEHAMR. A helical membrane pass occupies residues 63 to 83; it reads FPLVGSAMLLSLFLLFKFLSK. The Lumenal segment spans residues 84-89; it reads DLVNTV. Residues 90 to 110 traverse the membrane as a helical segment; that stretch reads LTAYFFILGIAALCATLLPSI. Residues 111-141 are Cytoplasmic-facing; the sequence is KRFLPKEWNDNAIVWRAPLFHSLSVEFTRSQ. Residues 142–162 traverse the membrane as a helical segment; that stretch reads VVASIPGFFFCIWYAAKKHWL. The Lumenal portion of the chain corresponds to 163 to 165; sequence ANN. The chain crosses the membrane as a helical span at residues 166–186; the sequence is VLGISFCIQGIEMLSLGSFKT. Topologically, residues 187-188 are cytoplasmic; that stretch reads GA. Residues 189–209 traverse the membrane as a helical segment; that stretch reads ILLSGLFFYDIFWVFFTPVMV. Asp198 is an active-site residue. Residues 210–230 lie on the Lumenal side of the membrane; that stretch reads SVAKSFDAPIKLLFPTGDAAR. Residues 231-251 form a helical membrane-spanning segment; the sequence is PFSMLGLGDIVIPGIFVALAL. Asp239 is a catalytic residue. At 252-266 the chain is on the cytoplasmic side; it reads RFDVSRGIKNRYFNS. A helical transmembrane segment spans residues 267-287; sequence AFLGYTVGLTVTIIVMNWFQA. Residues 288–290 lie on the Lumenal side of the membrane; that stretch reads AQP. The PAL motif lies at 290–292; sequence PAL. A helical transmembrane segment spans residues 291–311; that stretch reads ALLYIVPGVIGFVAVHCLWNG. Residues 312–343 are Cytoplasmic-facing; that stretch reads EVKPLLEYNESKAEEEEACEEDTDSKQNKKKE. Over residues 324 to 334 the composition is skewed to acidic residues; it reads AEEEEACEEDT. The disordered stretch occupies residues 324-343; that stretch reads AEEEEACEEDTDSKQNKKKE. The Endoplasmic reticulum targeting signal motif lies at 340-343; it reads KKKE.

The protein belongs to the peptidase A22B family. In terms of tissue distribution, ubiquitous.

It is found in the endoplasmic reticulum membrane. Intramembrane-cleaving aspartic protease (I-CLiP) that cleaves type II membrane signal peptides in the hydrophobic plane of the membrane. Catalyzes intramembrane proteolysis of some signal peptides after they have been cleaved from a preprotein, resulting in the release of the fragment from the ER membrane into the cytoplasm. This Oryza sativa subsp. japonica (Rice) protein is Signal peptide peptidase 2 (SPP2).